Here is a 247-residue protein sequence, read N- to C-terminus: MNKLKKEANVFFKKNQTAASLDFKKTLPSIELFSATLNSEESQSLDQLFLSESQNYSDEEFYQEDILAVKLLTGQIKSIQKQHVLLLGEKIYNARKILSKDHFSSTTFSSWIELVFRTKSSAYNALAYYELFINLPNQTLQKEFQSIPYKSAYILAARKGDLKTKVDVIGKVCGMSNSSAIRVLDQFLPSSRNKDVRETIDKSDSEKNRQLSDFLIEILRIMCSGVSLSSYNENLLQQLFELFKQKS.

Belongs to the UPF0137 (pGP6-D) family.

The polypeptide is Virulence plasmid protein pGP6-D (Chlamydia trachomatis).